A 53-amino-acid polypeptide reads, in one-letter code: Large ribosomal subunit protein eL40 (53 aa).

This sequence belongs to the eukaryotic ribosomal protein eL40 family.

The polypeptide is Large ribosomal subunit protein eL40 (Pyrobaculum arsenaticum (strain DSM 13514 / JCM 11321 / PZ6)).